A 94-amino-acid chain; its full sequence is Large ribosomal subunit protein bL28 (94 aa).

The protein belongs to the bacterial ribosomal protein bL28 family.

The protein is Large ribosomal subunit protein bL28 of Hyphomonas neptunium (strain ATCC 15444).